Here is a 182-residue protein sequence, read N- to C-terminus: UPF0397 protein BCG9842_B2659 (182 aa).

Helical transmembrane passes span 9 to 29 (VVAI…GFSI), 40 to 60 (AILT…IGLI), 71 to 91 (WGIW…MGLI), 114 to 134 (ITGL…DIIV), and 142 to 162 (IVIQ…VLGL).

The protein belongs to the UPF0397 family.

The protein resides in the cell membrane. In Bacillus cereus (strain G9842), this protein is UPF0397 protein BCG9842_B2659.